A 1256-amino-acid chain; its full sequence is SNF2 domain-containing protein CLASSY 1 (1256 aa).

Disordered stretches follow at residues 269–290 and 448–467; these read ELRRSKRRSGRPERYGDSEIQP and GNVVHKRNGPHSRIRSVSRE. A compositionally biased stretch (basic and acidic residues) spans 278-290; the sequence is GRPERYGDSEIQP. The segment covering 451 to 463 has biased composition (basic residues); it reads VHKRNGPHSRIRS. The 200-residue stretch at 699–898 folds into the Helicase ATP-binding domain; that stretch reads DPSSDKIGGC…FNTLCLARPK (200 aa). 712–719 is a binding site for ATP; it reads HTPGAGKT. Residues 849–852 carry the DEAH box motif; it reads DEGH. The Helicase C-terminal domain maps to 1061-1222; it reads FVLNLVFRVV…EFVEDPSQWQ (162 aa).

It belongs to the helicase family. In terms of assembly, interacts with NRPD1, NRPD3 and SHH1.

The protein localises to the nucleus. It is found in the nucleoplasm. The protein resides in the nucleolus. Probable chromatin remodeling factor. Required for the initial establishment of DNA methylation and for accumulation of 24-nt siRNAs. May act on RNA templates by remodeling ribonucleoprotein structures and thereby influencing the availability of the RNA to polymerases. The protein is SNF2 domain-containing protein CLASSY 1 (CLSY1) of Arabidopsis thaliana (Mouse-ear cress).